A 610-amino-acid polypeptide reads, in one-letter code: Estrogen receptor beta-2 (610 aa).

Residues 1–170 (MSSSTGPAPA…GILGKGDTHF (170 aa)) are modulating. NR C4-type zinc fingers lie at residues 171–191 (CAVC…CEGC) and 207–231 (CPAT…LRKC). The segment at residues 171 to 236 (CAVCHDYASG…RLRKCYEVGM (66 aa)) is a DNA-binding region (nuclear receptor). One can recognise an NR LBD domain in the interval 302–538 (SPEQLVNCIL…DLLLEMLDAN (237 aa)). The interval 566–596 (HTSKQQPALKESNQDTRHSPQAEGTVDKTLH) is disordered. A compositionally biased stretch (basic and acidic residues) spans 577–596 (SNQDTRHSPQAEGTVDKTLH).

It belongs to the nuclear hormone receptor family. NR3 subfamily. In terms of assembly, binds DNA as a homodimer. Can form a heterodimer with ER-alpha. In terms of tissue distribution, predominantly expressed in pituitary, telencephalon and hypothalamus as well as in the liver.

Its subcellular location is the nucleus. Functionally, binds estrogens with an affinity similar to that of ER-alpha, and activates expression of reporter genes containing estrogen response elements (ERE) in an estrogen-dependent manner. The protein is Estrogen receptor beta-2 (esr2b) of Carassius auratus (Goldfish).